Here is a 769-residue protein sequence, read N- to C-terminus: Sensor histidine kinase ComP (769 aa).

Over 1 to 9 the chain is Cytoplasmic; sequence MKNLIKKFT. Residues 10–33 form a helical membrane-spanning segment; sequence IAVIVLSILYISYTTYISMNGIII. The Extracellular segment spans residues 34–113; the sequence is GTKIHKNDKS…DFDLVTLNRP (80 aa). Residues 114 to 134 traverse the membrane as a helical segment; sequence YSFFLFVLPLFFYFLSIICIF. Residues 135-144 lie on the Cytoplasmic side of the membrane; that stretch reads YILKVNKKRR. A helical membrane pass occupies residues 145-167; it reads SFAAYILILLLLDISIAYISAGG. Residues 168–235 are Extracellular-facing; that stretch reads PFRGHIINRY…QDYLQVDIDF (68 aa). Residues 236–257 form a helical membrane-spanning segment; the sequence is LATLNLVSFATLTLFSFSAIYL. Topologically, residues 258 to 272 are cytoplasmic; it reads HLNKYKYAEHSFILK. A helical membrane pass occupies residues 273–295; that stretch reads LLILTNTLSFAPFLIFFVLPIIF. The Extracellular portion of the chain corresponds to 296-299; sequence TGNY. A helical transmembrane segment spans residues 300 to 323; it reads IFPALASASLLVLIPFGLVYQFVA. Residues 324-337 are Cytoplasmic-facing; sequence NKMFDIEFILGRMR. A helical membrane pass occupies residues 338–357; sequence YYALLAMIPTLLIVGALVLF. Over 358 to 361 the chain is Extracellular; it reads DVMD. The chain crosses the membrane as a helical span at residues 362 to 383; the sequence is IQMNPVRQTVFFFVVMFAVFYF. Over 384–769 the chain is Cytoplasmic; that stretch reads KEVMDFKFRL…GFKADIEIEL (386 aa). A Histidine kinase domain is found at 571–769; the sequence is LARDLHDSVL…GFKADIEIEL (199 aa). At histidine 576 the chain carries Phosphohistidine; by autocatalysis.

In terms of processing, autophosphorylates on a histidine and transfers the phosphate group onto an aspartate in ComA, thus activating it.

Its subcellular location is the cell membrane. It carries out the reaction ATP + protein L-histidine = ADP + protein N-phospho-L-histidine.. Sensor in the two-component regulatory system ComP/ComA involved in a major quorum response pathway that regulates the development of genetic competence. Plays a role in sporulation, at least partly interchangeable with that of SpoIIJ. Probably activates ComA by phosphorylation. This is Sensor histidine kinase ComP (comP) from Bacillus subtilis (strain 168).